The chain runs to 163 residues: MNHYTILGLSEPPHVPELTSADLKTAYKQALLKNHPDKLQEREAYTGSVQITAITTAYACLSNSKLKKEYDLSLKNGANGVKSGPGSDVFDLTELEEREDADGMFSWYKPCRCGEAGGYVLTEEHLENNEKYYEGVDVQFHEIVVQCGTCSLWITVQYGVEEE.

Residues 2-74 form the J domain; sequence NHYTILGLSE…KLKKEYDLSL (73 aa). The region spanning 89–159 is the DPH-type MB domain; that stretch reads VFDLTELEER…CSLWITVQYG (71 aa). Zn(2+) contacts are provided by Cys111, Cys113, Cys147, and Cys150.

The protein belongs to the DPH4 family.

The protein localises to the cytoplasm. Its subcellular location is the nucleus. The protein operates within protein modification; peptidyl-diphthamide biosynthesis. Functionally, required for the first step of diphthamide biosynthesis, the transfer of 3-amino-3-carboxypropyl from S-adenosyl-L-methionine to a histidine residue. Diphthamide is a post-translational modification of histidine which occurs in elongation factor 2. This chain is Diphthamide biosynthesis protein 4 (DPH4), found in Yarrowia lipolytica (strain CLIB 122 / E 150) (Yeast).